The following is a 344-amino-acid chain: Heat-inducible transcription repressor HrcA (344 aa).

The protein belongs to the HrcA family.

In terms of biological role, negative regulator of class I heat shock genes (grpE-dnaK-dnaJ and groELS operons). Prevents heat-shock induction of these operons. This chain is Heat-inducible transcription repressor HrcA, found in Desulforudis audaxviator (strain MP104C).